A 779-amino-acid chain; its full sequence is Probable glutamine--tRNA ligase (779 aa).

ATP-binding positions include 268 to 270 (EPN) and 274 to 280 (HIGHAKA). Asp-300 and Tyr-440 together coordinate L-glutamine. ATP-binding positions include Thr-459, 488 to 489 (RL), and 496 to 498 (LSK).

This sequence belongs to the class-I aminoacyl-tRNA synthetase family.

The catalysed reaction is tRNA(Gln) + L-glutamine + ATP = L-glutaminyl-tRNA(Gln) + AMP + diphosphate. The sequence is that of Probable glutamine--tRNA ligase (glnS) from Dictyostelium discoideum (Social amoeba).